The chain runs to 549 residues: Copalyl diphosphate synthase (549 aa).

The DXDDTA motif signature appears at 321–326; it reads DADDTA. The short motif at 451 to 457 is the QXXDGSW motif element; the sequence is QRDDGSW.

Belongs to the terpene synthase family. Mg(2+) serves as cofactor.

The enzyme catalyses (2E,6E,10E)-geranylgeranyl diphosphate = (+)-copalyl diphosphate. Its function is as follows. Involved in the biosynthesis of the labdane-type bicyclic diterpene labda-8(17),12(E),14-triene. Catalyzes the conversion of geranylgeranyl diphosphate (GGDP) into (+)-copalyl diphosphate. This chain is Copalyl diphosphate synthase, found in Streptomyces anulatus (Streptomyces chrysomallus).